The sequence spans 227 residues: UPF0173 metal-dependent hydrolase BCQ_4418 (227 aa).

This sequence belongs to the UPF0173 family.

This chain is UPF0173 metal-dependent hydrolase BCQ_4418, found in Bacillus cereus (strain Q1).